The sequence spans 98 residues: Gibberellin-regulated protein 1 (98 aa).

A signal peptide spans 1-23; that stretch reads MAISKALIASLLISLLVLQLVQA.

Belongs to the GASA family. Post-translationally, six disulfide bonds may be present. Expressed in flower buds, style, stamen filaments, vasculature of sepals, flower abscission zone and green siliques. Lower levels seen in the root phloem, cotyledons and vasculature of rosette leaves.

It is found in the secreted. In terms of biological role, gibberellin-regulated protein that may function in hormonal controlled steps of development such as seed germination, flowering and seed maturation. The polypeptide is Gibberellin-regulated protein 1 (GASA1) (Arabidopsis thaliana (Mouse-ear cress)).